The primary structure comprises 145 residues: MLTAEEKAAVTAFWGKVKVDEVGGEALGRLLVVYPWTQRFFEHFGDLSTADAVMHNAKVKEHGKRVLDAFSEGLKHLDDLKGAFAKLSELHCDKLHVDPENFRLLGNVLVVVLARHFGKEFTPELQADYQKVVTGVANALAHRYH.

In terms of domain architecture, Globin spans 1–145 (MLTAEEKAAV…VANALAHRYH (145 aa)). Phosphothreonine is present on threonine 11. Lysine 58 is modified (N6-acetyllysine). Histidine 62 provides a ligand contact to heme b. Residue lysine 81 is modified to N6-acetyllysine. Histidine 91 contributes to the heme b binding site. Cysteine 92 carries the S-nitrosocysteine modification.

It belongs to the globin family. As to quaternary structure, heterotetramer of two alpha chains and two beta chains. Red blood cells.

Involved in oxygen transport from the lung to the various peripheral tissues. This is Hemoglobin subunit beta (HBB) from Alces alces alces (European moose).